Here is a 60-residue protein sequence, read N- to C-terminus: U-scutigerotoxin(02)-Tl4a (60 aa).

It belongs to the scutigerotoxin-02 family. In terms of processing, contains 3 disulfide bonds. As to expression, expressed by the venom gland.

The protein localises to the secreted. The chain is U-scutigerotoxin(02)-Tl4a from Thereuopoda longicornis (Long-legged centipede).